Here is a 260-residue protein sequence, read N- to C-terminus: Achaete-scute homolog 2 (260 aa).

2 disordered regions span residues 85–126 (AGAC…RNER) and 191–239 (PATR…EDSS). Low complexity-rich tracts occupy residues 110-121 (ATEASSSSAAVA) and 200-218 (TQPS…STSP). The bHLH domain occupies 118-170 (AAVARRNERERNRVKLVNLGFQALRQHVPHGGANKKLSKVETLRSAVEYIRAL).

In terms of assembly, efficient DNA binding requires dimerization with another bHLH protein. Forms heterodimers with bHLH transcription factor TCF3. May not heterodimerise with bHLH protein HAND1. As to expression, expressed in Schwann cells in the peripheral nerve (at protein level). Also expressed by endothelial cells (at protein level). May be expressed in neuronal precursor cells.

Its subcellular location is the nucleus. The protein localises to the cytoplasm. Its function is as follows. Transcription factor. Binds to E-box motifs 5'-CANNTG-3' in the regulatory elements of target genes, probably as a heterodimer with another basic helix-loop-helix (bHLH) protein such as the transcription factor TCF3. May bind both open and closed chromatin, acting as a pioneer transcription factor to allow other factors to bind and activate lineage-specific genes. Required during post-implantation development for the generation of some differentiated trophoblast cell types. Transcriptional activity of ASCL2 may be antagonised in a subset of trophoblast cells by bHLH transcription factor HAND1, perhaps by competing for dimerization with other bHLH proteins. Involved in differentiation and function of follicular T-helper (Tfh) cells, thereby playing a role in germinal center responses; probably modulates expression of genes involved in Tfh cell function, such as BCL6. May also act as a suppressor of Th1-, Th2- and Th17-cell differentiation. Induces the formation of stem cells in intestinal crypts in vitro, synergistically activating transcription of target genes, such as SOX9, together with TCF4/beta-catenin. May form a bistable transcriptional switch, controlling expression of its own gene together with Wnt/R-spondin signaling, and thereby maintaining stem cell characteristics. Modulates expression of target genes, including perhaps down-regulating EGR1/Krox24 and chemokine CXCL10/Mob-1 and up-regulating CXCR4 and CDKN1C/p57kip2, in Schwann cells. May play a role in reducing proliferation of Schwann cells, perhaps acting via modulation of expression of CDKN1C. May be dispensable for blastocyst formation and later embryonic function. May be involved in the determination of neuronal precursors. The polypeptide is Achaete-scute homolog 2 (Ascl2) (Rattus norvegicus (Rat)).